Here is a 179-residue protein sequence, read N- to C-terminus: Crossover junction endodeoxyribonuclease RuvC (179 aa).

Active-site residues include aspartate 7 and glutamate 67. Mn(2+) contacts are provided by aspartate 7 and glutamate 67. Positions 68–74 match the DNA-binding loop motif; the sequence is DQILRRQ. Catalysis depends on residues histidine 139 and aspartate 142. Histidine 139 serves as a coordination point for Mn(2+).

This sequence belongs to the RuvC family. As to quaternary structure, homodimer which binds Holliday junction (HJ) DNA. The HJ becomes 2-fold symmetrical on binding to RuvC with unstacked arms; it has a different conformation from HJ DNA in complex with RuvA. In the full resolvosome a probable DNA-RuvA(4)-RuvB(12)-RuvC(2) complex forms which resolves the HJ. Mn(2+) is required as a cofactor.

It localises to the cytoplasm. It catalyses the reaction Endonucleolytic cleavage at a junction such as a reciprocal single-stranded crossover between two homologous DNA duplexes (Holliday junction).. Its function is as follows. The RuvA-RuvB-RuvC complex processes Holliday junction (HJ) DNA during genetic recombination and DNA repair. Endonuclease that resolves HJ intermediates. Cleaves cruciform DNA by making single-stranded nicks across the HJ at symmetrical positions within the homologous arms, probably yielding a 5'-phosphate and a 3'-hydroxyl group; requires a central core of homology in the junction. The consensus cleavage sequence is 5'-(G/C)TC(C/G)-3' (a different site than E.coli); cleavage occurs on the 3'-side of the TC dinucleotide at the point of strand exchange. Also resolves nicked HJ intermediates, replication forks and Y-junction DNA in vitro. HJ branch migration catalyzed by RuvA-RuvB allows RuvC to scan DNA until it finds its consensus sequence, where it cleaves and resolves the cruciform DNA. Functionally, binds HJ DNA independently of homologous core or consensus sequence; Mn(2+) is not essential for binding but improves it, while &gt;1.0 mM Mg(2+) inhibit binding. Also binds Y-junction DNA less well. Requires a homologous core to cleave DNA. Another study shows divalent cations (Mn(2+), Mg(2+) and Ca(2+), tested up to 5.0 mM) improve DNA binding considerably over binding in their absence. In Deinococcus radiodurans (strain ATCC 13939 / DSM 20539 / JCM 16871 / CCUG 27074 / LMG 4051 / NBRC 15346 / NCIMB 9279 / VKM B-1422 / R1), this protein is Crossover junction endodeoxyribonuclease RuvC.